Here is a 132-residue protein sequence, read N- to C-terminus: Large ribosomal subunit protein uL14 (132 aa).

Belongs to the universal ribosomal protein uL14 family. As to quaternary structure, part of the 50S ribosomal subunit. Forms a cluster with proteins L3 and L24e, part of which may contact the 16S rRNA in 2 intersubunit bridges.

Binds to 23S rRNA. Forms part of two intersubunit bridges in the 70S ribosome. This is Large ribosomal subunit protein uL14 from Halobacterium salinarum (strain ATCC 29341 / DSM 671 / R1).